Here is a 786-residue protein sequence, read N- to C-terminus: Zinc finger transcription factor YRM1 (786 aa).

The segment at 1 to 25 is disordered; it reads MSKRGSLQDRASPSEETVKKAQKRR. Residues 31-59 constitute a DNA-binding region (zn(2)-C6 fungal-type); that stretch reads CAFCRKRKLRCDQQKPMCSTCKTRGRSGC. The segment at 721 to 747 is disordered; it reads PLAGNSPGLPPEEVRNNSENASHNNET. A compositionally biased stretch (polar residues) spans 737 to 747; sequence NSENASHNNET.

The protein localises to the cytoplasm. It localises to the nucleus. In terms of biological role, transcription factor involved in the regulation of multidrug resistance genes. Acts in concert with YRR1. In Saccharomyces cerevisiae (strain ATCC 204508 / S288c) (Baker's yeast), this protein is Zinc finger transcription factor YRM1 (YRM1).